The chain runs to 244 residues: Probable transcriptional regulatory protein TT_C0469 (244 aa).

The protein belongs to the TACO1 family.

The protein resides in the cytoplasm. The chain is Probable transcriptional regulatory protein TT_C0469 from Thermus thermophilus (strain ATCC BAA-163 / DSM 7039 / HB27).